A 379-amino-acid chain; its full sequence is MSGTLALTEQLIARASVTPDDQHCQRLLIERLAALGFEHETIESNGVTNLWAVKRGVDGTAGKLLAFAGHTDVVPTGPLEQWHSAPFEPTHRDGKLYGRGAADMKASIAGFVVASEEFVAAHPAHRGSIAFLITSDEEGPATDGTIKVVEALQARGERMDYCIVGEPTSSARLGDMVKNGRRGSMSGKLIVKGVQGHIAYPHLAKNPVHLLAPALAELVAERWDDGNEYFPPTTWQVSNIHSGTGATNVIAGHADVMFNFRFSTASTVEGLQARVHAILDKHKLDYDLQWTVSGLPFLTPRGDLSNALAAAIRDETGVTTELSTTGGTSDGRFIARICPQVIEFGPLNASIHKTDEHIEVAHIEPLKNVYRRVLEQLIA.

His-70 provides a ligand contact to Zn(2+). The active site involves Asp-72. Asp-103 lines the Zn(2+) pocket. Glu-137 serves as the catalytic Proton acceptor. Positions 138, 166, and 352 each coordinate Zn(2+).

This sequence belongs to the peptidase M20A family. DapE subfamily. As to quaternary structure, homodimer. It depends on Zn(2+) as a cofactor. Co(2+) is required as a cofactor.

The catalysed reaction is N-succinyl-(2S,6S)-2,6-diaminopimelate + H2O = (2S,6S)-2,6-diaminopimelate + succinate. It participates in amino-acid biosynthesis; L-lysine biosynthesis via DAP pathway; LL-2,6-diaminopimelate from (S)-tetrahydrodipicolinate (succinylase route): step 3/3. Catalyzes the hydrolysis of N-succinyl-L,L-diaminopimelic acid (SDAP), forming succinate and LL-2,6-diaminopimelate (DAP), an intermediate involved in the bacterial biosynthesis of lysine and meso-diaminopimelic acid, an essential component of bacterial cell walls. The protein is Succinyl-diaminopimelate desuccinylase of Paraburkholderia xenovorans (strain LB400).